The chain runs to 235 residues: Elongation factor Tu, chloroplastic (235 aa).

The tr-type G domain maps to 1 to 125 (KNMITGAAQM…AVDSYIPTPE (125 aa)). 47 to 50 (NKED) contributes to the GTP binding site.

This sequence belongs to the TRAFAC class translation factor GTPase superfamily. Classic translation factor GTPase family. EF-Tu/EF-1A subfamily.

Its subcellular location is the plastid. It is found in the chloroplast. The catalysed reaction is GTP + H2O = GDP + phosphate + H(+). In terms of biological role, GTP hydrolase that promotes the GTP-dependent binding of aminoacyl-tRNA to the A-site of ribosomes during protein biosynthesis. The polypeptide is Elongation factor Tu, chloroplastic (tufA) (Mantoniella squamata (Unicellular alga)).